The chain runs to 158 residues: 3-hydroxyacyl-[acyl-carrier-protein] dehydratase FabZ (158 aa).

Residue His57 is part of the active site.

This sequence belongs to the thioester dehydratase family. FabZ subfamily.

The protein localises to the cytoplasm. The enzyme catalyses a (3R)-hydroxyacyl-[ACP] = a (2E)-enoyl-[ACP] + H2O. Functionally, involved in unsaturated fatty acids biosynthesis. Catalyzes the dehydration of short chain beta-hydroxyacyl-ACPs and long chain saturated and unsaturated beta-hydroxyacyl-ACPs. This Anaeromyxobacter sp. (strain Fw109-5) protein is 3-hydroxyacyl-[acyl-carrier-protein] dehydratase FabZ.